The sequence spans 103 residues: Cystatin-A (103 aa).

Met-1 is modified (N-acetylmethionine). The short motif at 52–56 is the Secondary area of contact element; it reads QVVAG.

The protein belongs to the cystatin family.

The protein localises to the cytoplasm. This is an intracellular thiol proteinase inhibitor. The chain is Cystatin-A (Csta) from Rattus norvegicus (Rat).